The following is a 23-amino-acid chain: Mu-conotoxin-like SxIIIB (23 aa).

Pyrrolidone carboxylic acid is present on Gln-1. 3 cysteine pairs are disulfide-bonded: Cys-3–Cys-16, Cys-4–Cys-21, and Cys-11–Cys-22. Residue Ala-23 is modified to Alanine amide.

It belongs to the conotoxin M superfamily. Expressed by the venom duct.

The protein resides in the secreted. Its function is as follows. Mu-conotoxins block voltage-gated sodium channels (Nav). The protein is Mu-conotoxin-like SxIIIB of Conus striolatus (Cone snail).